The following is a 440-amino-acid chain: G-protein coupled receptor family C group 5 member C (440 aa).

The signal sequence occupies residues 1 to 22 (MATHRTLLMCLGLPLFFPGALA). Over 23–49 (QNHAPPGCSPDLDPLYYNLCDRSGAWG) the chain is Extracellular. The helical transmembrane segment at 50-70 (IVSEAVAGAGIITTFVLTIIL) threads the bilayer. Over 71–84 (VASLPFVQDTKKRS) the chain is Cytoplasmic. The helical transmembrane segment at 85–105 (LLGTQVFFLLGTLGLFCLVFA) threads the bilayer. Topologically, residues 106-119 (CVVKPDFSTCASRR) are extracellular. The helical transmembrane segment at 120-140 (FLFGVLFAICFSCLVAHVLSL) threads the bilayer. Residues 141–155 (NFLTRKNHGPRGWVI) lie on the Cytoplasmic side of the membrane. A helical membrane pass occupies residues 156 to 176 (FTVALLLTLVEVIINTEWLII). At 177–207 (TLVRGGGQVSPLGNVSADSTMTSPCAIANMD) the chain is on the extracellular side. The N-linked (GlcNAc...) asparagine glycan is linked to N190. Residues 208 to 228 (FVMALIYVMLLLLTAFLGAWP) traverse the membrane as a helical segment. At 229-240 (TLCGRFKRWRKH) the chain is on the cytoplasmic side. The chain crosses the membrane as a helical span at residues 241–261 (GVFVLLTTVISIAIWVVWIVM). Over 262–278 (YTYGNEQHHSPTWDDPT) the chain is Extracellular. Residues 279 to 299 (LAIALAANAWTFVLFYVIPEV) form a helical membrane-spanning segment. The Cytoplasmic segment spans residues 300 to 440 (SQVTKPSPEQ…QVFRNPYVWD (141 aa)). Residues S343, S382, S402, and S405 each carry the phosphoserine modification. A Phosphotyrosine modification is found at Y413. T422 is subject to Phosphothreonine.

Belongs to the G-protein coupled receptor 3 family.

Its subcellular location is the cell membrane. This retinoic acid-inducible G-protein coupled receptor provide evidence for a possible interaction between retinoid and G-protein signaling pathways. This Mus musculus (Mouse) protein is G-protein coupled receptor family C group 5 member C (Gprc5c).